The primary structure comprises 77 residues: MKEQKWIHEGLITESLPNGMFRVRLDNEDFILGYISGRIRRSFIRILPGDRVKIEISRYDSTRGRIIYRLRNKDSNY.

The 71-residue stretch at 1–71 (MKEQKWIHEG…TRGRIIYRLR (71 aa)) folds into the S1-like domain.

Belongs to the IF-1 family. In terms of assembly, component of the 30S ribosomal translation pre-initiation complex which assembles on the 30S ribosome in the order IF-2 and IF-3, IF-1 and N-formylmethionyl-tRNA(fMet); mRNA recruitment can occur at any time during PIC assembly.

It localises to the plastid. The protein localises to the chloroplast. One of the essential components for the initiation of protein synthesis. Stabilizes the binding of IF-2 and IF-3 on the 30S subunit to which N-formylmethionyl-tRNA(fMet) subsequently binds. Helps modulate mRNA selection, yielding the 30S pre-initiation complex (PIC). Upon addition of the 50S ribosomal subunit IF-1, IF-2 and IF-3 are released leaving the mature 70S translation initiation complex. The chain is Translation initiation factor IF-1, chloroplastic from Brexia madagascariensis.